Consider the following 316-residue polypeptide: Transaldolase (316 aa).

Catalysis depends on lysine 127, which acts as the Schiff-base intermediate with substrate.

Belongs to the transaldolase family. Type 2 subfamily.

It localises to the cytoplasm. It carries out the reaction D-sedoheptulose 7-phosphate + D-glyceraldehyde 3-phosphate = D-erythrose 4-phosphate + beta-D-fructose 6-phosphate. The protein operates within carbohydrate degradation; pentose phosphate pathway; D-glyceraldehyde 3-phosphate and beta-D-fructose 6-phosphate from D-ribose 5-phosphate and D-xylulose 5-phosphate (non-oxidative stage): step 2/3. Its function is as follows. Transaldolase is important for the balance of metabolites in the pentose-phosphate pathway. This chain is Transaldolase (tal), found in Helicobacter pylori (strain ATCC 700392 / 26695) (Campylobacter pylori).